A 331-amino-acid polypeptide reads, in one-letter code: MKKPVVVILAVVVLLAAGIGGWLWYQSQQDRGLTLYGNVDIRTLNMSFRVGGRLESLAVDEGDTVKSGQLLGQLDKAPYENALMQAKASVSVAQAQYDLMLAGYRDEEVAQAEAAVKQAKAAYDYSQNFYNRQQGLWKSRTISANDLENARSSRDQAQATLKSAQDKLSQYRTGNRPQDIAQAKANLEQAQAQLAQAELDLHDTTLIAPSNGTLMTRAVEPGSMLSAGSTVLTLSLTRPVWVRAYIDEPNLSQAQPGREILLYTDGRPDKPYHGKIGFVSPTAEFTPKTVETPDLRTDLVYRLRIIVTDADDALRQGMPITVKFNDGEGHE.

The signal sequence occupies residues 1–16 (MKKPVVVILAVVVLLA). Residues 107-208 (EEVAQAEAAV…LDLHDTTLIA (102 aa)) adopt a coiled-coil conformation.

The protein belongs to the UPF0194 family.

It localises to the periplasm. The sequence is that of UPF0194 membrane protein Ent638_1286 from Enterobacter sp. (strain 638).